Here is a 292-residue protein sequence, read N- to C-terminus: 4-hydroxy-tetrahydrodipicolinate synthase (292 aa).

A pyruvate-binding site is contributed by Thr45. The active-site Proton donor/acceptor is Tyr133. The Schiff-base intermediate with substrate role is filled by Lys161. Ile203 contacts pyruvate.

It belongs to the DapA family. In terms of assembly, homotetramer; dimer of dimers.

It localises to the cytoplasm. It carries out the reaction L-aspartate 4-semialdehyde + pyruvate = (2S,4S)-4-hydroxy-2,3,4,5-tetrahydrodipicolinate + H2O + H(+). Its pathway is amino-acid biosynthesis; L-lysine biosynthesis via DAP pathway; (S)-tetrahydrodipicolinate from L-aspartate: step 3/4. Catalyzes the condensation of (S)-aspartate-beta-semialdehyde [(S)-ASA] and pyruvate to 4-hydroxy-tetrahydrodipicolinate (HTPA). The sequence is that of 4-hydroxy-tetrahydrodipicolinate synthase from Nitrosomonas europaea (strain ATCC 19718 / CIP 103999 / KCTC 2705 / NBRC 14298).